Reading from the N-terminus, the 194-residue chain is 7-methyl-GTP pyrophosphatase (194 aa).

Residue D70 is the Proton acceptor of the active site.

This sequence belongs to the Maf family. YceF subfamily. Requires a divalent metal cation as cofactor.

It localises to the cytoplasm. The catalysed reaction is N(7)-methyl-GTP + H2O = N(7)-methyl-GMP + diphosphate + H(+). Its function is as follows. Nucleoside triphosphate pyrophosphatase that hydrolyzes 7-methyl-GTP (m(7)GTP). May have a dual role in cell division arrest and in preventing the incorporation of modified nucleotides into cellular nucleic acids. This chain is 7-methyl-GTP pyrophosphatase, found in Vibrio vulnificus (strain CMCP6).